The primary structure comprises 218 residues: Large ribosomal subunit protein bL25 (218 aa).

Residues 178–218 (VTPPTVTEDPDATEEDNTTAESVEATGERNDDNLDRPGRVE) are disordered. The span at 185–195 (EDPDATEEDNT) shows a compositional bias: acidic residues. The span at 203 to 218 (TGERNDDNLDRPGRVE) shows a compositional bias: basic and acidic residues.

It belongs to the bacterial ribosomal protein bL25 family. CTC subfamily. As to quaternary structure, part of the 50S ribosomal subunit; part of the 5S rRNA/L5/L18/L25 subcomplex. Contacts the 5S rRNA. Binds to the 5S rRNA independently of L5 and L18.

This is one of the proteins that binds to the 5S RNA in the ribosome where it forms part of the central protuberance. This chain is Large ribosomal subunit protein bL25, found in Shouchella clausii (strain KSM-K16) (Alkalihalobacillus clausii).